A 424-amino-acid polypeptide reads, in one-letter code: S-adenosylmethionine synthase (424 aa).

Residue H14 participates in ATP binding. Position 16 (D16) interacts with Mg(2+). E42 lines the K(+) pocket. 2 residues coordinate L-methionine: E55 and Q98. A flexible loop region spans residues Q98–R108. ATP is bound by residues D165–K167, K242–F243, D251, R257–K258, A274, and K278. D251 serves as a coordination point for L-methionine. Residue K282 coordinates L-methionine.

It belongs to the AdoMet synthase family. In terms of assembly, homotetramer; dimer of dimers. It depends on Mg(2+) as a cofactor. The cofactor is K(+).

The protein resides in the cytoplasm. The catalysed reaction is L-methionine + ATP + H2O = S-adenosyl-L-methionine + phosphate + diphosphate. It participates in amino-acid biosynthesis; S-adenosyl-L-methionine biosynthesis; S-adenosyl-L-methionine from L-methionine: step 1/1. Catalyzes the formation of S-adenosylmethionine (AdoMet) from methionine and ATP. The overall synthetic reaction is composed of two sequential steps, AdoMet formation and the subsequent tripolyphosphate hydrolysis which occurs prior to release of AdoMet from the enzyme. The protein is S-adenosylmethionine synthase of Azobacteroides pseudotrichonymphae genomovar. CFP2.